Here is a 275-residue protein sequence, read N- to C-terminus: Lectin (275 aa).

Residues 1-30 (MASLQTQMISFYAIFLSILLTTILFFKVNS) form the signal peptide. Glu-149 and Asp-151 together coordinate Mn(2+). Ca(2+)-binding residues include Asp-151, Phe-153, Asn-155, and Asp-159. Mn(2+) contacts are provided by Asp-159 and His-166. A glycan (N-linked (GlcNAc...) asparagine) is linked at Asn-217.

This sequence belongs to the leguminous lectin family. In terms of assembly, tetramer of two alpha and two beta chains.

Functionally, D-mannose specific lectin. The protein is Lectin (LECA) of Pisum sativum (Garden pea).